The sequence spans 41 residues: MADQPERNPNSQPVELNRTSLYLGLLLVFVVGLLFSSYFLN.

A helical transmembrane segment spans residues 20-40 (SLYLGLLLVFVVGLLFSSYFL).

This sequence belongs to the PsbL family. As to quaternary structure, PSII is composed of 1 copy each of membrane proteins PsbA, PsbB, PsbC, PsbD, PsbE, PsbF, PsbH, PsbI, PsbJ, PsbK, PsbL, PsbM, PsbT, PsbX, PsbY, PsbZ, Psb30/Ycf12, peripheral proteins PsbO, CyanoQ (PsbQ), PsbU, PsbV and a large number of cofactors. It forms dimeric complexes.

The protein resides in the cellular thylakoid membrane. One of the components of the core complex of photosystem II (PSII). PSII is a light-driven water:plastoquinone oxidoreductase that uses light energy to abstract electrons from H(2)O, generating O(2) and a proton gradient subsequently used for ATP formation. It consists of a core antenna complex that captures photons, and an electron transfer chain that converts photonic excitation into a charge separation. This subunit is found at the monomer-monomer interface and is required for correct PSII assembly and/or dimerization. This Synechococcus sp. (strain JA-2-3B'a(2-13)) (Cyanobacteria bacterium Yellowstone B-Prime) protein is Photosystem II reaction center protein L.